The sequence spans 360 residues: Histidinol-phosphate aminotransferase (360 aa).

K223 is subject to N6-(pyridoxal phosphate)lysine.

Belongs to the class-II pyridoxal-phosphate-dependent aminotransferase family. Histidinol-phosphate aminotransferase subfamily. As to quaternary structure, homodimer. Pyridoxal 5'-phosphate serves as cofactor.

It carries out the reaction L-histidinol phosphate + 2-oxoglutarate = 3-(imidazol-4-yl)-2-oxopropyl phosphate + L-glutamate. The protein operates within amino-acid biosynthesis; L-histidine biosynthesis; L-histidine from 5-phospho-alpha-D-ribose 1-diphosphate: step 7/9. In Bacillus subtilis (strain 168), this protein is Histidinol-phosphate aminotransferase (hisC).